The chain runs to 145 residues: Putative nickel-responsive regulator (145 aa).

Residues His77, His88, His90, and Cys96 each coordinate Ni(2+).

This sequence belongs to the transcriptional regulatory CopG/NikR family. Ni(2+) serves as cofactor.

Its function is as follows. Transcriptional regulator. The polypeptide is Putative nickel-responsive regulator (Rhizobium rhizogenes (strain K84 / ATCC BAA-868) (Agrobacterium radiobacter)).